We begin with the raw amino-acid sequence, 120 residues long: uncharacterized protein (120 aa).

The protein to M.jannaschii MJ0361.

This is an uncharacterized protein from Methanocaldococcus jannaschii (strain ATCC 43067 / DSM 2661 / JAL-1 / JCM 10045 / NBRC 100440) (Methanococcus jannaschii).